The following is an 88-amino-acid chain: Small ribosomal subunit protein bS20 (88 aa).

Belongs to the bacterial ribosomal protein bS20 family.

Binds directly to 16S ribosomal RNA. The sequence is that of Small ribosomal subunit protein bS20 from Oenococcus oeni (strain ATCC BAA-331 / PSU-1).